A 592-amino-acid chain; its full sequence is Signal peptide peptidase-like 2B (592 aa).

Residues 1 to 25 (MAAAVAAALARLLAAFLLLAAQVAC) form the signal peptide. Residues 26 to 174 (EYGMVHVVSQ…APKEPVLDYN (149 aa)) are Lumenal-facing. The region spanning 71-149 (TASLLCSAAD…VALLSYKDML (79 aa)) is the PA domain. Asn-97 and Asn-129 each carry an N-linked (GlcNAc...) asparagine glycan. Residues 175–195 (MVIIFIMAVGTVAIGGYWAGS) traverse the membrane as a helical segment. At 196-221 (RDVKKRYMKHKRDDGPEKQEDEAVDV) the chain is on the cytoplasmic side. The helical transmembrane segment at 222–244 (TPVMTCVFVVMCCSMLVLLYYFY) threads the bilayer. Residues 245-248 (DLLV) are Lumenal-facing. Residues 249 to 271 (YVVIGIFCLASATGLYSCLAPCV) traverse the membrane as a helical segment. Over 272–293 (RRLPFGKCRIPNNSLPYFHKRP) the chain is Cytoplasmic. The helical transmembrane segment at 294–314 (QARMLLLALFCVAVSVVWGVF) threads the bilayer. Residues 315–319 (RNEDQ) are Lumenal-facing. The helical transmembrane segment at 320–340 (WAWVLQDALGIAFCLYMLKTI) threads the bilayer. Residues 341-348 (RLPTFKAC) are Cytoplasmic-facing. A helical membrane pass occupies residues 349-369 (TLLLLVLFLYDIFFVFITPFL). Residue Asp-359 is part of the active site. Residues 370–412 (TKSGSSIMVEVATGPSDSATREKLPMVLKVPRLNSSPLALCDR) are Lumenal-facing. The chain crosses the membrane as a helical span at residues 413 to 433 (PFSLLGFGDILVPGLLVAYCH). Asp-421 is an active-site residue. At 434–445 (RFDIQVQSSRVY) the chain is on the cytoplasmic side. A helical membrane pass occupies residues 446-466 (FVACTIAYGVGLLVTFVALAL). Residues 467–470 (MQRG) lie on the Lumenal side of the membrane. The helical transmembrane segment at 471-491 (QPALLYLVPCTLVTSCAVALW) threads the bilayer. A PAL motif is present at residues 472–474 (PAL). The Cytoplasmic segment spans residues 492–592 (RRELGVFWTG…SPVTQPGASA (101 aa)). Residues 512 to 524 (PWAPAPADGPQPP) are compositionally biased toward pro residues. The disordered stretch occupies residues 512–592 (PWAPAPADGP…SPVTQPGASA (81 aa)). Over residues 580-592 (AQPSPVTQPGASA) the composition is skewed to polar residues.

Belongs to the peptidase A22B family. Monomer. Homodimer. Interacts with ITM2B. Interacts with TNF. Interacts with the simian foamy virus envelope glycoprotein gp130 and its processed leader peptide gp18LP; preferentially interacts with the leader peptide gp18LP. Post-translationally, glycosylated. As to expression, expressed predominantly in adrenal cortex and mammary gland.

The protein resides in the cell membrane. The protein localises to the golgi apparatus membrane. It is found in the lysosome membrane. It localises to the endosome membrane. Its subcellular location is the membrane. In terms of biological role, intramembrane-cleaving aspartic protease (I-CLiP) that cleaves type II membrane signal peptides in the hydrophobic plane of the membrane. Functions in ITM2B and TNF processing. Catalyzes the intramembrane cleavage of the anchored fragment of shed TNF-alpha (TNF), which promotes the release of the intracellular domain (ICD) for signaling to the nucleus. May play a role in the regulation of innate and adaptive immunity. Catalyzes the intramembrane cleavage of the simian foamy virus processed leader peptide gp18 of the envelope glycoprotein gp130 dependently of prior ectodomain shedding by furin or furin-like proprotein convertase (PC)-mediated cleavage proteolysis. The polypeptide is Signal peptide peptidase-like 2B (Homo sapiens (Human)).